Here is a 549-residue protein sequence, read N- to C-terminus: Leucine-rich repeat, immunoglobulin-like domain and transmembrane domain-containing protein 2 (549 aa).

The signal sequence occupies residues 1–22; that stretch reads MAFVFYCFLQVLVSWVIHAVQP. The LRRNT domain occupies 23–54; that stretch reads FCLPECTCSEESFGRSLQCMSMSLGKIPDNFP. LRR repeat units follow at residues 80–103, 104–125, 128–149, and 152–173; these read SLEYLWLNFNNVTVIHLGALEDLP, ELRELRLEGNKLRSVPWTAFRA, LLRVLDLKHNRIDSVPELALQF, and NLIYLDISSNRLTVVSKGVFLN. N-linked (GlcNAc...) asparagine glycosylation is present at Asn90. An LRRCT domain is found at 200 to 252; the sequence is NPWLCDCRLRGLAQFVKSVGPPFILVNSYLVCQGPVSKAGQLLHETELGVCMK. The 87-residue stretch at 253–339 folds into the Ig-like domain; it reads PTISTPSVNV…FNSIGRSSLV (87 aa). An N-linked (GlcNAc...) asparagine glycan is attached at Asn261. An intrachain disulfide couples Cys274 to Cys327. The 87-residue stretch at 361–447 folds into the Fibronectin type-III domain; sequence EVSAYVDLRV…QPPSQGQCVV (87 aa). Residues 463–483 form a helical membrane-spanning segment; sequence LLHVTVVLCAVLLALPVGAYV. Asn491 carries N-linked (GlcNAc...) asparagine glycosylation. The segment at 521 to 549 is disordered; it reads FKDPSGVYEDGESHRVMEEDEEVEKEGIS. The span at 538 to 549 shows a compositional bias: acidic residues; that stretch reads EEDEEVEKEGIS.

Interacts with LRIT1; may form a heterodimer with LRIT1.

Its subcellular location is the membrane. In Mus musculus (Mouse), this protein is Leucine-rich repeat, immunoglobulin-like domain and transmembrane domain-containing protein 2 (Lrit2).